The chain runs to 55 residues: Large ribosomal subunit protein bL33A (55 aa).

This sequence belongs to the bacterial ribosomal protein bL33 family.

The chain is Large ribosomal subunit protein bL33A from Salinispora tropica (strain ATCC BAA-916 / DSM 44818 / JCM 13857 / NBRC 105044 / CNB-440).